We begin with the raw amino-acid sequence, 65 residues long: Small vasohibin-binding protein (65 aa).

The span at 1–22 shows a compositional bias: basic and acidic residues; the sequence is MEPACRKDKQKQQTPTRGDRTK. The segment at 1 to 30 is disordered; sequence MEPACRKDKQKQQTPTRGDRTKQKTAQQEL. The stretch at 31–51 forms a coiled coil; sequence KQRQRAEIYALNKVMTELEQQ.

The protein belongs to the SVBP family.

It localises to the cytoplasm. It is found in the secreted. Its subcellular location is the cytoskeleton. Functionally, enhances the tyrosine carboxypeptidase activity of vash1 and vash2, thereby promoting the removal of the C-terminal tyrosine residue of alpha-tubulin. Also required to enhance the solubility and secretion of vash1 and vash2. May play a role in axon and excitatory synapse formation. The chain is Small vasohibin-binding protein from Danio rerio (Zebrafish).